Reading from the N-terminus, the 273-residue chain is MTDTTGNPLLSLDDIHFTYPGTTAPVLRGATLHLAQGDRLGLLGHNGSGKTTLLHIAMGLLRPESGTVHHRNAVAHDEASLAALRRDIGFLFQNADDQLFCPTVLEDVAFGPLNLGLSPEQARERATQTLQGLGLEGFGARVTHRLSGGEKKMVALASVLSMQPTALLLDEPTNDLDPATRQRLIDVLNRMSATHIIISHDWDFLARTCTTFLTVDDGIVCTSRHTPHVHTHIHHGGEVAHEHPSRGCCHQHDGSHHHAGHDDDHPHTSQTTE.

Residues 10 to 242 (LSLDDIHFTY…IHHGGEVAHE (233 aa)) enclose the ABC transporter domain. Residue 44–51 (GHNGSGKT) coordinates ATP. Residues 234–273 (HHGGEVAHEHPSRGCCHQHDGSHHHAGHDDDHPHTSQTTE) are disordered. Over residues 235–267 (HGGEVAHEHPSRGCCHQHDGSHHHAGHDDDHPH) the composition is skewed to basic and acidic residues.

Belongs to the ABC transporter superfamily.

The protein localises to the cell inner membrane. Its function is as follows. Probably part of an ABC transporter complex. Responsible for energy coupling to the transport system. This is Putative ABC transporter ATP-binding protein DVU_1056 from Nitratidesulfovibrio vulgaris (strain ATCC 29579 / DSM 644 / CCUG 34227 / NCIMB 8303 / VKM B-1760 / Hildenborough) (Desulfovibrio vulgaris).